We begin with the raw amino-acid sequence, 413 residues long: 2,3-bisphosphoglycerate-independent phosphoglycerate mutase (413 aa).

It belongs to the BPG-independent phosphoglycerate mutase family. A-PGAM subfamily.

It carries out the reaction (2R)-2-phosphoglycerate = (2R)-3-phosphoglycerate. The protein operates within carbohydrate degradation; glycolysis; pyruvate from D-glyceraldehyde 3-phosphate: step 3/5. Its function is as follows. Catalyzes the interconversion of 2-phosphoglycerate and 3-phosphoglycerate. The protein is 2,3-bisphosphoglycerate-independent phosphoglycerate mutase of Sulfolobus acidocaldarius (strain ATCC 33909 / DSM 639 / JCM 8929 / NBRC 15157 / NCIMB 11770).